The chain runs to 488 residues: Bifunctional protein GlmU (488 aa).

A pyrophosphorylase region spans residues 1–237 (MPRTRTPLAA…AEEASGVNDR (237 aa)). UDP-N-acetyl-alpha-D-glucosamine is bound by residues 13 to 16 (LAAG), lysine 27, glutamine 82, 87 to 88 (GT), 110 to 112 (SGD), glycine 149, glutamate 164, asparagine 179, and asparagine 235. Mg(2+) is bound at residue aspartate 112. Asparagine 235 serves as a coordination point for Mg(2+). Residues 238 to 258 (VELSRANRVMVGRLAEAFMRA) are linker. An N-acetyltransferase region spans residues 259-488 (GVTIEDPARF…KGRPAARRAS (230 aa)). Residues arginine 341 and lysine 359 each contribute to the UDP-N-acetyl-alpha-D-glucosamine site. The active-site Proton acceptor is the histidine 371. The UDP-N-acetyl-alpha-D-glucosamine site is built by tyrosine 374 and asparagine 385. Residues alanine 388, 394-395 (NY), serine 413, alanine 431, and arginine 448 contribute to the acetyl-CoA site. The tract at residues 459–488 (AQRQAEKQMKGTATGPASARKGRPAARRAS) is disordered. Residues 478-488 (RKGRPAARRAS) show a composition bias toward basic residues.

It in the N-terminal section; belongs to the N-acetylglucosamine-1-phosphate uridyltransferase family. The protein in the C-terminal section; belongs to the transferase hexapeptide repeat family. In terms of assembly, homotrimer. It depends on Mg(2+) as a cofactor.

It localises to the cytoplasm. The enzyme catalyses alpha-D-glucosamine 1-phosphate + acetyl-CoA = N-acetyl-alpha-D-glucosamine 1-phosphate + CoA + H(+). It catalyses the reaction N-acetyl-alpha-D-glucosamine 1-phosphate + UTP + H(+) = UDP-N-acetyl-alpha-D-glucosamine + diphosphate. It participates in nucleotide-sugar biosynthesis; UDP-N-acetyl-alpha-D-glucosamine biosynthesis; N-acetyl-alpha-D-glucosamine 1-phosphate from alpha-D-glucosamine 6-phosphate (route II): step 2/2. The protein operates within nucleotide-sugar biosynthesis; UDP-N-acetyl-alpha-D-glucosamine biosynthesis; UDP-N-acetyl-alpha-D-glucosamine from N-acetyl-alpha-D-glucosamine 1-phosphate: step 1/1. It functions in the pathway bacterial outer membrane biogenesis; LPS lipid A biosynthesis. Functionally, catalyzes the last two sequential reactions in the de novo biosynthetic pathway for UDP-N-acetylglucosamine (UDP-GlcNAc). The C-terminal domain catalyzes the transfer of acetyl group from acetyl coenzyme A to glucosamine-1-phosphate (GlcN-1-P) to produce N-acetylglucosamine-1-phosphate (GlcNAc-1-P), which is converted into UDP-GlcNAc by the transfer of uridine 5-monophosphate (from uridine 5-triphosphate), a reaction catalyzed by the N-terminal domain. The protein is Bifunctional protein GlmU of Anaeromyxobacter dehalogenans (strain 2CP-1 / ATCC BAA-258).